The sequence spans 193 residues: Dirigent protein (193 aa).

Residues 1–29 (MGGEKAFSFIFLLFLCFFLANLSASSAHP) form the signal peptide. An intrachain disulfide couples cysteine 40 to cysteine 192. N-linked (GlcNAc...) asparagine glycosylation is found at asparagine 59 and asparagine 129.

Belongs to the plant dirigent protein family. As to quaternary structure, homodimer. In terms of tissue distribution, expressed in rhizomes, stems, and leaves.

It localises to the secreted. Its subcellular location is the extracellular space. The protein resides in the apoplast. Its pathway is aromatic compound metabolism; phenylpropanoid biosynthesis. Its function is as follows. Dirigent proteins impart stereoselectivity on the phenoxy radical-coupling reaction, yielding optically active lignans from two molecules of coniferyl alcohol in the biosynthesis of lignans, flavonolignans, and alkaloids and thus plays a central role in plant secondary metabolism. Also involved in the biosynthesis of etoposide, a chemotherapeutic compound of the topoisomerase inhibitor family. The chain is Dirigent protein from Sinopodophyllum hexandrum (Himalayan may apple).